The chain runs to 481 residues: Abl interactor 1 (481 aa).

Alanine 2 is subject to N-acetylalanine. The tract at residues alanine 18–glutamine 79 is required for binding to WASF1. The t-SNARE coiled-coil homology domain maps to lysine 45–arginine 107. Position 53 is a phosphotyrosine (tyrosine 53). Residues alanine 158–glycine 285 form a disordered region. Polar residues predominate over residues glycine 161–asparagine 175. Phosphothreonine is present on residues threonine 174 and threonine 178. A phosphoserine mark is found at serine 183 and serine 187. Position 213 is a phosphotyrosine (tyrosine 213). Threonine 215 carries the post-translational modification Phosphothreonine. Serine 216, serine 222, and serine 225 each carry phosphoserine. A compositionally biased stretch (polar residues) spans serine 222 to arginine 235. Low complexity-rich tracts occupy residues serine 248–glycine 258 and glycine 272–serine 282. 2 positions are modified to phosphoserine: serine 292 and serine 296. Disordered regions lie at residues alanine 318–glutamine 348 and asparagine 361–valine 392. Pro residues-rich tracts occupy residues proline 366–aspartate 376 and serine 383–valine 392. Residues asparagine 419–histidine 478 form the SH3 domain. Tyrosine 428 is modified (phosphotyrosine). Position 439 is a phosphoserine (serine 439). Threonine 480 carries the post-translational modification Phosphothreonine.

Belongs to the ABI family. Interacts with ENAH, Abelson murine leukemia virus V-ABL, ABL1, STX1A, SNAP25, VAMP2, and through its N-terminus with WASF1. Part of a complex consisting of ABI1, STX1A and SNAP25. Part of a complex consisting of ABI1, EPS8 and SOS1. Interacts with EPS8, SOS1, SOS2, GRB2, SPTA1, and the first SH3 domain of NCK1. Component of the WAVE2 complex composed of ABI1, CYFIP1/SRA1, NCKAP1/NAP1 (NCKAP1l/HEM1 in hematopoietic cells) and WASF2/WAVE2. Interacts (via SH3 domain) with SHANK2 and SHANK3, but not SHANK1; the interaction is direct. Interacts with the heterodimer MYC:MAX; the interaction may enhance MYC:MAX transcriptional activity. Interacts with FNBP1L (via the SH3 domain), WASF2, and CDC42, but only in the presence of FNBP1L. Phosphorylated on tyrosine residues after serum stimulation or induction by v-Abl. Seems to be phosphorylated at Tyr-53 by ABL1, required for nuclear but not for synaptic localization. As to expression, widely expressed with highest levels in bone marrow, spleen, brain, testes, and embryonic brain. In adult brain prominently expressed in the neocortex, hippocampus and dentate gyrus.

It is found in the cytoplasm. The protein resides in the nucleus. Its subcellular location is the cell projection. It localises to the lamellipodium. The protein localises to the filopodium. It is found in the growth cone. The protein resides in the postsynaptic density. Its subcellular location is the cytoskeleton. Its function is as follows. May act in negative regulation of cell growth and transformation by interacting with nonreceptor tyrosine kinases ABL1 and/or ABL2. In vitro, at least isoform 2 and isoform 4 suppress the transforming activity of Abelson murine leukemia virus (v-Abl) after overexpression in fibroblasts. May play a role in regulation EGF-induced Erk pathway activation. Involved in cytoskeletal reorganization and EGFR signaling. Together with EPS8 participates in transduction of signals from Ras to Rac. In vitro, a trimeric complex of ABI1, EPS8 and SOS1 exhibits Rac specific guanine nucleotide exchange factor (GEF) activity and ABI1 seems to act as an adapter in the complex. Regulates ABL1/c-Abl-mediated phosphorylation of ENAH. Recruits WASF1 to lamellipodia and there seems to regulate WASF1 protein level. In brain, seems to regulate the dendritic outgrowth and branching as well as to determine the shape and number of synaptic contacts of developing neurons. This chain is Abl interactor 1, found in Mus musculus (Mouse).